The chain runs to 436 residues: tRNA-2-methylthio-N(6)-dimethylallyladenosine synthase (436 aa).

Positions 1 to 115 constitute an MTTase N-terminal domain; that stretch reads MRVFFKTYGC…IAEVLQKAAR (115 aa). 6 residues coordinate [4Fe-4S] cluster: Cys10, Cys46, Cys80, Cys151, Cys155, and Cys158. Positions 137–368 constitute a Radical SAM core domain; the sequence is RFSKHHAWIT…LELQKQINRE (232 aa). Residues 371 to 432 form the TRAM domain; that stretch reads MQYLGKVVEI…AGPLYGKLQK (62 aa).

It belongs to the methylthiotransferase family. MiaB subfamily. In terms of assembly, monomer. It depends on [4Fe-4S] cluster as a cofactor.

It localises to the cytoplasm. The catalysed reaction is N(6)-dimethylallyladenosine(37) in tRNA + (sulfur carrier)-SH + AH2 + 2 S-adenosyl-L-methionine = 2-methylsulfanyl-N(6)-dimethylallyladenosine(37) in tRNA + (sulfur carrier)-H + 5'-deoxyadenosine + L-methionine + A + S-adenosyl-L-homocysteine + 2 H(+). In terms of biological role, catalyzes the methylthiolation of N6-(dimethylallyl)adenosine (i(6)A), leading to the formation of 2-methylthio-N6-(dimethylallyl)adenosine (ms(2)i(6)A) at position 37 in tRNAs that read codons beginning with uridine. This chain is tRNA-2-methylthio-N(6)-dimethylallyladenosine synthase, found in Pseudothermotoga lettingae (strain ATCC BAA-301 / DSM 14385 / NBRC 107922 / TMO) (Thermotoga lettingae).